Here is a 409-residue protein sequence, read N- to C-terminus: Peptide chain release factor subunit 1 (409 aa).

Belongs to the eukaryotic release factor 1 family. In terms of assembly, heterodimer of two subunits, one of which binds GTP.

The protein resides in the cytoplasm. Functionally, directs the termination of nascent peptide synthesis (translation) in response to the termination codons UAA, UAG and UGA. In Methanopyrus kandleri (strain AV19 / DSM 6324 / JCM 9639 / NBRC 100938), this protein is Peptide chain release factor subunit 1.